Reading from the N-terminus, the 289-residue chain is Serine/threonine-protein phosphatase Pgam5, mitochondrial (289 aa).

The chain crosses the membrane as a helical span at residues 7 to 23 (FVCGTGAGLAVYYLQRL).

This sequence belongs to the phosphoglycerate mutase family. BPG-dependent PGAM subfamily. In terms of assembly, interacts with Pk92B/ASK1.

The protein localises to the mitochondrion outer membrane. It carries out the reaction O-phospho-L-seryl-[protein] + H2O = L-seryl-[protein] + phosphate. The catalysed reaction is O-phospho-L-threonyl-[protein] + H2O = L-threonyl-[protein] + phosphate. In terms of biological role, displays phosphatase activity for serine/threonine residues, and dephosphorylates and activates Pk92B kinase. Has apparently no phosphoglycerate mutase activity. This chain is Serine/threonine-protein phosphatase Pgam5, mitochondrial, found in Drosophila erecta (Fruit fly).